The primary structure comprises 201 residues: MGNLFGRKKQSRVTEQDKAILQLKQQRDKLRQYQKRIAQQLERERALARQLLRDGRKERAKLLLKKKRYQEQLLDRTENQISSLEAMVQSIEFTQIEMKVMEGLQFGNECLNKMHQVMSIEEVERILDETQEAVEYQRQIDELLAGSFTQEDEDAILEELSAITQEQIELPEVPSEPLPEKIPEDVPVKARPRQAELVAAS.

G2 carries N-myristoyl glycine lipidation. Residues 10–145 (QSRVTEQDKA…YQRQIDELLA (136 aa)) adopt a coiled-coil conformation. At S119 the chain carries Phosphoserine. Phosphothreonine is present on T130. Positions 168–179 (IELPEVPSEPLP) match the Type-2 MIT-interacting motif motif. Residues 171 to 201 (PEVPSEPLPEKIPEDVPVKARPRQAELVAAS) are disordered. Basic and acidic residues predominate over residues 178–188 (LPEKIPEDVPV).

Belongs to the SNF7 family. Probable core component of the endosomal sorting required for transport complex III (ESCRT-III). ESCRT-III components are thought to multimerize to form a flat lattice on the perimeter membrane of the endosome. Several assembly forms of ESCRT-III may exist that interact and act sequentially. Interacts with VPS4A; the interaction is direct. Interacts with VPS4B; the interaction is direct. Interacts with CHMP4A, CHMP4B and CHMP4C. Interacts with SNF8, VPS25 and VPS36. In terms of processing, ISGylated in a CHMP5-dependent manner. Isgylation weakens its interaction with VPS4A.

It localises to the endomembrane system. The protein resides in the endosome membrane. Its subcellular location is the late endosome membrane. The protein localises to the membrane. Functionally, probable core component of the endosomal sorting required for transport complex III (ESCRT-III) which is involved in multivesicular bodies (MVBs) formation and sorting of endosomal cargo proteins into MVBs. MVBs contain intraluminal vesicles (ILVs) that are generated by invagination and scission from the limiting membrane of the endosome and mostly are delivered to lysosomes enabling degradation of membrane proteins, such as stimulated growth factor receptors, lysosomal enzymes and lipids. The MVB pathway appears to require the sequential function of ESCRT-O, -I,-II and -III complexes. ESCRT-III proteins mostly dissociate from the invaginating membrane before the ILV is released. The ESCRT machinery also functions in topologically equivalent membrane fission events, such as the terminal stages of cytokinesis and the budding of enveloped viruses (lentiviruses). ESCRT-III proteins are believed to mediate the necessary vesicle extrusion and/or membrane fission activities, possibly in conjunction with the AAA ATPase VPS4. In the ESCRT-III complex, it probably serves as an acceptor for the ESCRT-II complex on endosomal membrane. This is Charged multivesicular body protein 6 (CHMP6) from Pongo abelii (Sumatran orangutan).